A 414-amino-acid chain; its full sequence is uncharacterized protein (414 aa).

Residues 1–66 (MNPSVPKVMK…LQRISKDYLK (66 aa)) lie on the Lumenal side of the membrane. The disordered stretch occupies residues 20–51 (SKEMNDTSLQLPSTTRSLSPKESNSNEDFNVD). Over residues 25–51 (DTSLQLPSTTRSLSPKESNSNEDFNVD) the composition is skewed to polar residues. A Glycyl lysine isopeptide (Lys-Gly) (interchain with G-Cter in ubiquitin) cross-link involves residue Lys40. Residues 67–87 (PNIGLVLLTVSYFFNSAMVVS) traverse the membrane as a helical segment. An EamA 1 domain is found at 78 to 215 (YFFNSAMVVS…SLLGVVLIVR (138 aa)). At 88-106 (TKVLENDPDDIANDRQIKP) the chain is on the cytoplasmic side. The helical transmembrane segment at 107–127 (LQILLVRMVITYIGTLIYMYI) threads the bilayer. Residues 128 to 144 (NKSTISDVPFGKPEVRK) lie on the Lumenal side of the membrane. A helical transmembrane segment spans residues 145 to 167 (WLVLRGCTGFFGVFGMYYSLMYL). The Cytoplasmic portion of the chain corresponds to 168 to 171 (TISD). Residues 172-191 (AVLITFLAPSLTIFLSWVIL) traverse the membrane as a helical segment. At 192-199 (RERFTKVE) the chain is on the lumenal side. A helical membrane pass occupies residues 200 to 220 (ALGSLISLLGVVLIVRPSFLF). Over 221–241 (GTPELTDSSSQIVESSDPKSR) the chain is Cytoplasmic. A helical membrane pass occupies residues 242 to 262 (LIATLVGLWGVLGMSCVYIII). The 127-residue stretch at 253-379 (LGMSCVYIII…IISATLWVIR (127 aa)) folds into the EamA 2 domain. Over 263–269 (RYIGKRA) the chain is Lumenal. Residues 270–290 (HAIMSVSYFSLITAIVSFIGI) form a helical membrane-spanning segment. Residues 291-307 (NTIPSMKFQIPHSKKQW) lie on the Cytoplasmic side of the membrane. Residues 308 to 328 (ILFGNLGVSGFIFQLLLTMGI) form a helical membrane-spanning segment. The Lumenal segment spans residues 329–357 (QRERAGRGSLMTYTQLLYAVFWDVALYKH). A helical transmembrane segment spans residues 358-378 (WPNIWSWIGMIIIISATLWVI). The Cytoplasmic portion of the chain corresponds to 379 to 414 (RIRAANNETTAKDLTPIIDDEENSIPLTEFDLSDSK).

This sequence to yeast YPL264c.

The protein localises to the membrane. This is an uncharacterized protein from Saccharomyces cerevisiae (strain ATCC 204508 / S288c) (Baker's yeast).